A 664-amino-acid polypeptide reads, in one-letter code: NAD(P)H-quinone oxidoreductase chain 5 (664 aa).

A run of 16 helical transmembrane segments spans residues 7–27, 39–59, 91–111, 120–140, 144–164, 187–207, 219–239, 258–278, 290–310, 327–347, 352–372, 395–415, 420–440, 495–515, 541–561, and 643–663; these read YAWL…IGLI, LNAV…FGLL, HLSA…MIYT, GYVR…GLVF, LVQV…LIGF, FGLL…EFDL, GQIS…GPVA, TPIS…FLVA, AMNV…TIAL, LGYM…FHLM, FKAM…EVVG, ATTF…AGFW, ILGL…ATAG, FPLM…VPWG, FLIM…IASL, and VQFY…FFSV.

The protein belongs to the complex I subunit 5 family.

It is found in the cell membrane. It catalyses the reaction a plastoquinone + NADH + (n+1) H(+)(in) = a plastoquinol + NAD(+) + n H(+)(out). The enzyme catalyses a plastoquinone + NADPH + (n+1) H(+)(in) = a plastoquinol + NADP(+) + n H(+)(out). NDH-1 shuttles electrons from NAD(P)H, via FMN and iron-sulfur (Fe-S) centers, to quinones in the respiratory chain. The immediate electron acceptor for the enzyme in this species is believed to be plastoquinone. Couples the redox reaction to proton translocation (for every two electrons transferred, four hydrogen ions are translocated across the cytoplasmic membrane), and thus conserves the redox energy in a proton gradient. The sequence is that of NAD(P)H-quinone oxidoreductase chain 5 (ndhF) from Picosynechococcus sp. (strain ATCC 27264 / PCC 7002 / PR-6) (Agmenellum quadruplicatum).